Reading from the N-terminus, the 353-residue chain is UPF0658 Golgi apparatus membrane protein C23H3.04 (353 aa).

Transmembrane regions (helical) follow at residues 39 to 59 (IFFL…EGYC), 76 to 96 (SLPI…YLCV), 103 to 123 (NIIE…YSIV), 172 to 192 (PFLI…GFLA), 226 to 246 (LLKI…MVLP), 249 to 269 (AVVE…ILTL), 281 to 301 (LMMT…FKII), and 318 to 338 (MITT…AIGF).

This sequence belongs to the UPF0658 family.

Its subcellular location is the golgi apparatus membrane. The chain is UPF0658 Golgi apparatus membrane protein C23H3.04 from Schizosaccharomyces pombe (strain 972 / ATCC 24843) (Fission yeast).